The primary structure comprises 272 residues: Putative phosphoenolpyruvate synthase regulatory protein (272 aa).

ADP is bound at residue 152 to 159 (GVSRCGKT).

This sequence belongs to the pyruvate, phosphate/water dikinase regulatory protein family. PSRP subfamily.

It catalyses the reaction [pyruvate, water dikinase] + ADP = [pyruvate, water dikinase]-phosphate + AMP + H(+). It carries out the reaction [pyruvate, water dikinase]-phosphate + phosphate + H(+) = [pyruvate, water dikinase] + diphosphate. Bifunctional serine/threonine kinase and phosphorylase involved in the regulation of the phosphoenolpyruvate synthase (PEPS) by catalyzing its phosphorylation/dephosphorylation. In Pseudomonas putida (strain ATCC 700007 / DSM 6899 / JCM 31910 / BCRC 17059 / LMG 24140 / F1), this protein is Putative phosphoenolpyruvate synthase regulatory protein.